The primary structure comprises 432 residues: Ribosomal protein uS12 methylthiotransferase RimO (432 aa).

Residues 4 to 122 enclose the MTTase N-terminal domain; it reads KTIDIITLGC…LLQDLGKAYH (119 aa). Residues C13, C51, C85, C146, C150, and C153 each coordinate [4Fe-4S] cluster. One can recognise a Radical SAM core domain in the interval 132 to 363; that stretch reads TTPKHYAYLK…MAIQQGISTE (232 aa). The TRAM domain maps to 366–432; sequence ASKVGQKMKV…DEFDLFGEII (67 aa).

It belongs to the methylthiotransferase family. RimO subfamily. [4Fe-4S] cluster is required as a cofactor.

The protein localises to the cytoplasm. The catalysed reaction is L-aspartate(89)-[ribosomal protein uS12]-hydrogen + (sulfur carrier)-SH + AH2 + 2 S-adenosyl-L-methionine = 3-methylsulfanyl-L-aspartate(89)-[ribosomal protein uS12]-hydrogen + (sulfur carrier)-H + 5'-deoxyadenosine + L-methionine + A + S-adenosyl-L-homocysteine + 2 H(+). In terms of biological role, catalyzes the methylthiolation of an aspartic acid residue of ribosomal protein uS12. The polypeptide is Ribosomal protein uS12 methylthiotransferase RimO (Bacteroides fragilis (strain ATCC 25285 / DSM 2151 / CCUG 4856 / JCM 11019 / LMG 10263 / NCTC 9343 / Onslow / VPI 2553 / EN-2)).